The primary structure comprises 338 residues: Lipoate-protein ligase A (338 aa).

The region spanning 29 to 216 (PATQRVLFLW…AFFVHYGERV (188 aa)) is the BPL/LPL catalytic domain. ATP-binding positions include Arg-71, 76-79 (GAVF), and Lys-134. Lys-134 contributes to the (R)-lipoate binding site.

This sequence belongs to the LplA family. In terms of assembly, monomer.

It localises to the cytoplasm. It catalyses the reaction L-lysyl-[lipoyl-carrier protein] + (R)-lipoate + ATP = N(6)-[(R)-lipoyl]-L-lysyl-[lipoyl-carrier protein] + AMP + diphosphate + H(+). Its pathway is protein modification; protein lipoylation via exogenous pathway; protein N(6)-(lipoyl)lysine from lipoate: step 1/2. It functions in the pathway protein modification; protein lipoylation via exogenous pathway; protein N(6)-(lipoyl)lysine from lipoate: step 2/2. Functionally, catalyzes both the ATP-dependent activation of exogenously supplied lipoate to lipoyl-AMP and the transfer of the activated lipoyl onto the lipoyl domains of lipoate-dependent enzymes. In Salmonella newport (strain SL254), this protein is Lipoate-protein ligase A.